The primary structure comprises 849 residues: Putative endoplasmic reticulum mannosidase MNL2 (849 aa).

The Cytoplasmic segment spans residues 1 to 12 (MSIARLVYSLFR). Residues 13–32 (RVRSVLLLFITISLLFYYTF) traverse the membrane as a helical; Signal-anchor for type II membrane protein segment. Residues 33–849 (QNEIDILNSY…TQGGHIIKKK (817 aa)) lie on the Lumenal side of the membrane. N-linked (GlcNAc...) asparagine glycosylation is present at asparagine 45. The tract at residues 56 to 79 (HNTEGSSKLDPPDLSSTGSDRIAT) is disordered. A disulfide bridge links cysteine 559 with cysteine 598.

Belongs to the glycosyl hydrolase 47 family. Ca(2+) serves as cofactor.

It is found in the endoplasmic reticulum membrane. It participates in protein modification; protein glycosylation. Functionally, putative mannosidase involved in glycoprotein quality control since it is involved in the targeting of misfolded glycoproteins for ER-associated protein degradation (ERAD). The protein is Putative endoplasmic reticulum mannosidase MNL2 (MNL2) of Saccharomyces cerevisiae (strain ATCC 204508 / S288c) (Baker's yeast).